The primary structure comprises 349 residues: MTELTLQNHCRTMWHFIPGLALSAVITGVALWGGAIPAVAGAGFSALTLAILLGMVIGNTIYPQIWKQCDGGVLFAKQHLLRLGIILYGFRLTFSQIADVGISGIVIDVLTLSSTFMLACFLGQKVFGLDRHTSWLIGAGSSICGAAAVLATEPVVKAEASKVTVAVATVVIFGTIAIFLYPAMYPLLAHWFSPETYGIYIGSTMHEVAQVVAAGHAVSPDAENAAVIAKMLRVMMLAPFLIILAARVKQLSPATGAEKSKITIPWFAIFFIVVAIFNSFHLLPKAVVDMLVTLDTVLLAMAMAALGLTTHVSALKKAGAKPLLMALALFAWLIIGGGAINVLIHSLIA.

Topologically, residues 1-12 (MTELTLQNHCRT) are periplasmic. A helical membrane pass occupies residues 13 to 35 (MWHFIPGLALSAVITGVALWGGA). The Cytoplasmic segment spans residues 36–38 (IPA). The helical transmembrane segment at 39–61 (VAGAGFSALTLAILLGMVIGNTI) threads the bilayer. Residues 62–99 (YPQIWKQCDGGVLFAKQHLLRLGIILYGFRLTFSQIAD) lie on the Periplasmic side of the membrane. A helical membrane pass occupies residues 100-122 (VGISGIVIDVLTLSSTFMLACFL). Residues 123 to 131 (GQKVFGLDR) are Cytoplasmic-facing. The chain crosses the membrane as a helical span at residues 132-151 (HTSWLIGAGSSICGAAAVLA). Over 152–162 (TEPVVKAEASK) the chain is Periplasmic. The chain crosses the membrane as a helical span at residues 163 to 185 (VTVAVATVVIFGTIAIFLYPAMY). At 186–261 (PLLAHWFSPE…SPATGAEKSK (76 aa)) the chain is on the cytoplasmic side. A helical transmembrane segment spans residues 262-284 (ITIPWFAIFFIVVAIFNSFHLLP). At 285–290 (KAVVDM) the chain is on the periplasmic side. The chain crosses the membrane as a helical span at residues 291–313 (LVTLDTVLLAMAMAALGLTTHVS). At 314–322 (ALKKAGAKP) the chain is on the cytoplasmic side. A helical membrane pass occupies residues 323 to 345 (LLMALALFAWLIIGGGAINVLIH). Residues 346-349 (SLIA) are Periplasmic-facing.

It belongs to the UPF0324 family.

The protein resides in the cell inner membrane. The sequence is that of UPF0324 inner membrane protein YeiH (yeiH) from Salmonella typhimurium (strain LT2 / SGSC1412 / ATCC 700720).